The primary structure comprises 284 residues: Adenylate kinase 1, chloroplastic (284 aa).

The N-terminal 36 residues, 1–36, are a transit peptide targeting the chloroplast; sequence MARLVRVARSSSLFGFGNRFYSTSAEASHASSPSPF. 61–66 is an ATP binding site; that stretch reads GVGKGT. Residues 81–110 form an NMP region; that stretch reads ATGDLVREELASSGPLSQKLSEIVNQGKLV. AMP is bound by residues threonine 82, arginine 87, 108-110, 138-141, and glutamine 145; these read KLV and GFPR. An LID region spans residues 174–222; that stretch reads GRRTCSQCGKGFNVAHINLKGENGRPGISMDPLLPPHQCMSKLVTRADD. Arginine 175 is an ATP binding site. The AMP site is built by arginine 219 and arginine 230. Residue glycine 258 coordinates ATP.

This sequence belongs to the adenylate kinase family. In terms of assembly, monomer. As to expression, highly expressed in flowers and at lower levels in roots, leaves and stems.

The protein resides in the plastid. It localises to the chloroplast stroma. The catalysed reaction is AMP + ATP = 2 ADP. In terms of biological role, catalyzes the reversible transfer of the terminal phosphate group between ATP and AMP. Plays an important role in cellular energy homeostasis, adenine nucleotide metabolism and plant growth. The sequence is that of Adenylate kinase 1, chloroplastic (ADK) from Arabidopsis thaliana (Mouse-ear cress).